The sequence spans 154 residues: 6,7-dimethyl-8-ribityllumazine synthase (154 aa).

5-amino-6-(D-ribitylamino)uracil contacts are provided by residues Phe-22, 56–58, and 81–83; these read AFE and VLI. 86-87 provides a ligand contact to (2S)-2-hydroxy-3-oxobutyl phosphate; that stretch reads ET. The active-site Proton donor is the His-89. Leu-114 lines the 5-amino-6-(D-ribitylamino)uracil pocket. Arg-128 is a binding site for (2S)-2-hydroxy-3-oxobutyl phosphate.

The protein belongs to the DMRL synthase family.

It carries out the reaction (2S)-2-hydroxy-3-oxobutyl phosphate + 5-amino-6-(D-ribitylamino)uracil = 6,7-dimethyl-8-(1-D-ribityl)lumazine + phosphate + 2 H2O + H(+). It participates in cofactor biosynthesis; riboflavin biosynthesis; riboflavin from 2-hydroxy-3-oxobutyl phosphate and 5-amino-6-(D-ribitylamino)uracil: step 1/2. Catalyzes the formation of 6,7-dimethyl-8-ribityllumazine by condensation of 5-amino-6-(D-ribitylamino)uracil with 3,4-dihydroxy-2-butanone 4-phosphate. This is the penultimate step in the biosynthesis of riboflavin. The chain is 6,7-dimethyl-8-ribityllumazine synthase from Chlamydia pneumoniae (Chlamydophila pneumoniae).